A 273-amino-acid polypeptide reads, in one-letter code: Phosphonates import ATP-binding protein PhnC (273 aa).

Residues 2-245 (LRIDKLTKRF…VAREIYGADA (244 aa)) enclose the ABC transporter domain. 34–41 (GRSGAGKS) contacts ATP.

Belongs to the ABC transporter superfamily. Phosphonates importer (TC 3.A.1.9.1) family. In terms of assembly, the complex is composed of two ATP-binding proteins (PhnC), two transmembrane proteins (PhnE) and a solute-binding protein (PhnD).

The protein resides in the cell inner membrane. It catalyses the reaction phosphonate(out) + ATP + H2O = phosphonate(in) + ADP + phosphate + H(+). Its function is as follows. Part of the ABC transporter complex PhnCDE involved in phosphonates import. Responsible for energy coupling to the transport system. In Ruegeria pomeroyi (strain ATCC 700808 / DSM 15171 / DSS-3) (Silicibacter pomeroyi), this protein is Phosphonates import ATP-binding protein PhnC.